Here is a 246-residue protein sequence, read N- to C-terminus: MARIALVTGGIGGIGTSICTRLAKDGCTVVANCHPSEAAAAEEWKQARAAEGFDIAVFTADVSSFDDSARMVREITEQVGPIDILVNCAGITRDKTFKKMEQAHWEAVINVNLNSVFNVTRQVWDGMLERGFGRIINISSVNGQRGQFGQANYSAAKAGMHGFTMALAQEGASKGVTVNTISPGYVETAMTLAMNDDVRNSIISGIPMRRMAQPDEIAAAIAFLAGDESGYMTGANLPVNGGLFMH.

NADP(+) contacts are provided by residues 12–14 and 88–92; these read GGI and CAGIT. Residues aspartate 94 and 147-150 each bind substrate; that span reads QFGQ. The Proton acceptor role is filled by tyrosine 153. An NADP(+)-binding site is contributed by 183 to 186; sequence PGYV. 184–185 is a binding site for substrate; sequence GY.

The protein belongs to the short-chain dehydrogenases/reductases (SDR) family.

It localises to the cytoplasm. It carries out the reaction a (3R)-3-hydroxyacyl-CoA + NADP(+) = a 3-oxoacyl-CoA + NADPH + H(+). It functions in the pathway biopolymer metabolism; poly-(R)-3-hydroxybutanoate biosynthesis. The chain is Acetoacetyl-CoA reductase from Allochromatium vinosum (strain ATCC 17899 / DSM 180 / NBRC 103801 / NCIMB 10441 / D) (Chromatium vinosum).